A 360-amino-acid polypeptide reads, in one-letter code: Protein Wnt-2 (360 aa).

Positions 1–26 (MNSSSLFGIWLSVPLILSWVTPQVSS) are cleaved as a signal peptide. Intrachain disulfides connect C76/C87, C127/C135, C137/C157, C206/C220, C208/C215, C278/C309, C294/C304, C308/C348, C324/C339, C326/C336, and C331/C332. Residue S212 is the site of O-palmitoleoyl serine; by PORCN attachment. N295 is a glycosylation site (N-linked (GlcNAc...) asparagine).

The protein belongs to the Wnt family. In terms of processing, palmitoleoylation is required for efficient binding to frizzled receptors. Depalmitoleoylation leads to Wnt signaling pathway inhibition.

It localises to the secreted. It is found in the extracellular space. Its subcellular location is the extracellular matrix. Functionally, ligand for members of the frizzled family of seven transmembrane receptors. Functions in the canonical Wnt signaling pathway that results in activation of transcription factors of the TCF/LEF family. Functions as a upstream regulator of FGF10 expression. Plays an important role in embryonic lung development. May contribute to embryonic brain development by regulating the proliferation of dopaminergic precursors and neurons. The protein is Protein Wnt-2 (WNT2) of Monodelphis domestica (Gray short-tailed opossum).